Reading from the N-terminus, the 212-residue chain is Ribonuclease HII (212 aa).

The RNase H type-2 domain occupies 24-212 (QLVAGVDEVG…PVKKALGIEE (189 aa)). Positions 30, 31, and 122 each coordinate a divalent metal cation.

Belongs to the RNase HII family. Mn(2+) serves as cofactor. Requires Mg(2+) as cofactor.

It is found in the cytoplasm. The catalysed reaction is Endonucleolytic cleavage to 5'-phosphomonoester.. Endonuclease that specifically degrades the RNA of RNA-DNA hybrids. This chain is Ribonuclease HII, found in Vibrio campbellii (strain ATCC BAA-1116).